A 390-amino-acid chain; its full sequence is Chorismate synthase 2 (390 aa).

2 residues coordinate NADP(+): Arg39 and Arg45. Residues 132–134, 253–254, Gly298, 313–317, and Arg339 each bind FMN; these read RSS, NA, and KPIPT.

It belongs to the chorismate synthase family. Homotetramer. FMNH2 serves as cofactor.

It catalyses the reaction 5-O-(1-carboxyvinyl)-3-phosphoshikimate = chorismate + phosphate. The protein operates within metabolic intermediate biosynthesis; chorismate biosynthesis; chorismate from D-erythrose 4-phosphate and phosphoenolpyruvate: step 7/7. Its function is as follows. Catalyzes the anti-1,4-elimination of the C-3 phosphate and the C-6 proR hydrogen from 5-enolpyruvylshikimate-3-phosphate (EPSP) to yield chorismate, which is the branch point compound that serves as the starting substrate for the three terminal pathways of aromatic amino acid biosynthesis. This reaction introduces a second double bond into the aromatic ring system. The chain is Chorismate synthase 2 from Bacillus cereus (strain ATCC 14579 / DSM 31 / CCUG 7414 / JCM 2152 / NBRC 15305 / NCIMB 9373 / NCTC 2599 / NRRL B-3711).